The following is a 202-amino-acid chain: MSDTTKVLVLYYSMYGHIDTLAKEIAAGVAEVDGVEVALKRVPEHMSAELLSTIHARTDFDTPIASVDELADYDGILIGTPTRFGNMAGQMRNFLDQTGGLWAKGKLVGKAGGAFTSTATGGGAETTLLSVYTNFLHHGMVVVGVPYGTPEMFDTSEARAGGPYGAATLAGGDGSRQPSDKERTIARFQGRHFAGVAKKLKG.

The Flavodoxin-like domain occupies 7-193 (VLVLYYSMYG…TIARFQGRHF (187 aa)). Residues 13–18 (SMYGHI) and 82–84 (TRF) each bind FMN. An NAD(+)-binding site is contributed by Y15. W102 contributes to the substrate binding site. Residues 117–122 (STATGG) and H137 each bind FMN.

It belongs to the WrbA family. Requires FMN as cofactor.

The enzyme catalyses a quinone + NADH + H(+) = a quinol + NAD(+). The catalysed reaction is a quinone + NADPH + H(+) = a quinol + NADP(+). This is NAD(P)H dehydrogenase (quinone) from Rhodospirillum rubrum (strain ATCC 11170 / ATH 1.1.1 / DSM 467 / LMG 4362 / NCIMB 8255 / S1).